We begin with the raw amino-acid sequence, 362 residues long: Cobalt-precorrin-5B C(1)-methyltransferase (362 aa).

It belongs to the CbiD family.

The enzyme catalyses Co-precorrin-5B + S-adenosyl-L-methionine = Co-precorrin-6A + S-adenosyl-L-homocysteine. It functions in the pathway cofactor biosynthesis; adenosylcobalamin biosynthesis; cob(II)yrinate a,c-diamide from sirohydrochlorin (anaerobic route): step 6/10. In terms of biological role, catalyzes the methylation of C-1 in cobalt-precorrin-5B to form cobalt-precorrin-6A. The chain is Cobalt-precorrin-5B C(1)-methyltransferase from Synechococcus sp. (strain CC9902).